A 705-amino-acid chain; its full sequence is Ovotransferrin (705 aa).

A signal peptide spans 1 to 19 (MKLILCTVLSLGIAAVCFA). Transferrin-like domains are found at residues 26–352 (IRWC…SMRK) and 364–689 (IQWC…SLKT). 2 disulfides stabilise this stretch: C29/C64 and C39/C55. 2 residues coordinate Fe(3+): D79 and Y111. 4 cysteine pairs are disulfide-bonded: C134-C216, C179-C193, C190-C201, and C247-C261. Hydrogencarbonate is bound by residues T136, R140, A142, and G143. Residue Y210 participates in Fe(3+) binding. A Fe(3+)-binding site is contributed by H269. The connecting region stretch occupies residues 352–360 (KDQLTPSPR). 2 cysteine pairs are disulfide-bonded: C367–C399 and C377–C390. 2 residues coordinate Fe(3+): D414 and Y450. 7 cysteine pairs are disulfide-bonded: C424/C699, C440/C662, C473/C549, C497/C690, C507/C521, C518/C532, and C589/C603. The hydrogencarbonate site is built by T475, R479, A481, and G482. N492 carries N-linked (GlcNAc...) asparagine glycosylation. Y543 provides a ligand contact to Fe(3+). Residue H611 participates in Fe(3+) binding.

This sequence belongs to the transferrin family. In terms of assembly, monomer. Different forms of hen transferrin are distinguished by their carbohydrate composition. Ovotransferrin and embryo serum transferrin but not adult serum transferrin, have bisecting N-acetylglucosamine. Transferrin secreted by embryo hepatocytes in primary culture is marked by the presence of (alpha1-6) fucosylation of the core N-acetylglucosamine. Serum transferrins also differ in the number of attached neuraminic acid residues. In both embryo forms, sialylation occurs on the Man (alpha 1-3)-linked antennae. As to expression, expressed in the magnum of the oviduct (at protein level).

Its subcellular location is the secreted. Its function is as follows. Transferrins are iron binding transport proteins which can bind two Fe(3+) ions in association with the binding of an anion, usually bicarbonate. Responsible for the transport of iron from sites of absorption and heme degradation to those of storage and utilization. There are two forms of hen transferrin, ovotransferrin, found in the ovoducts and, serum transferrin, secreted by the liver. Serum transferrin may also have a role in stimulating cell proliferation and is regulated by iron levels. Ovotransferrin has a bacteriostatic function and, is not controlled by iron levels. This Gallus gallus (Chicken) protein is Ovotransferrin.